We begin with the raw amino-acid sequence, 426 residues long: Histidine--tRNA ligase (426 aa).

Belongs to the class-II aminoacyl-tRNA synthetase family. As to quaternary structure, homodimer.

It localises to the cytoplasm. It catalyses the reaction tRNA(His) + L-histidine + ATP = L-histidyl-tRNA(His) + AMP + diphosphate + H(+). The sequence is that of Histidine--tRNA ligase from Streptococcus equi subsp. zooepidemicus (strain MGCS10565).